Here is a 136-residue protein sequence, read N- to C-terminus: Calcitonin (136 aa).

The signal sequence occupies residues 1 to 25 (MGFLKFSPFLVVSILLLYQACGLQA). The propeptide occupies 26–82 (VPLRSTLESSPGMATLSEEEARLLAALVQNYMQMKVRELEQEEEQEAEGSSLDSPRS). At Ser42 the chain carries Phosphoserine. The segment at 64–84 (LEQEEEQEAEGSSLDSPRSKR) is disordered. A disulfide bond links Cys85 and Cys91. Residue Asn87 is glycosylated (N-linked (GlcNAc...) asparagine). Residues 114–136 (GAPGKKRDMAKDLETNHHPYFGN) form a disordered region. At Pro116 the chain carries Proline amide. Positions 118-130 (KKRDMAKDLETNH) are enriched in basic and acidic residues. The propeptide occupies 121–136 (DMAKDLETNHHPYFGN).

Belongs to the calcitonin family.

It localises to the secreted. In terms of biological role, calcitonin is a peptide hormone that causes a rapid but short-lived drop in the level of calcium and phosphate in blood by promoting the incorporation of those ions in the bones. Calcitonin function is mediated by the calcitonin receptor/CALCR and the CALCR-RAMP2 (AMYR2) receptor complex. This Rattus norvegicus (Rat) protein is Calcitonin.